The following is a 430-amino-acid chain: Aspartate aminotransferase, mitochondrial (430 aa).

The N-terminal 29 residues, 1–29 (MALLHSGRVLSGVASAFHPGLAAAASARA), are a transit peptide targeting the mitochondrion. Residue T48 is modified to Phosphothreonine. N6-acetyllysine is present on K59. G65 contributes to the substrate binding site. N6-acetyllysine; alternate is present on K73. An N6-succinyllysine; alternate modification is found at K73. Residue K82 is modified to N6-acetyllysine. K90 carries the post-translational modification N6-acetyllysine; alternate. Residue K90 is modified to N6-succinyllysine; alternate. A 3'-nitrotyrosine; alternate modification is found at Y96. Y96 carries the post-translational modification Phosphotyrosine; alternate. 3 positions are modified to N6-acetyllysine; alternate: K107, K122, and K159. 3 positions are modified to N6-succinyllysine; alternate: K107, K122, and K159. W162 is a substrate binding site. Position 185 is an N6-acetyllysine; alternate (K185). At K185 the chain carries N6-succinyllysine; alternate. A substrate-binding site is contributed by N215. An N6-succinyllysine modification is found at K227. The residue at position 234 (K234) is an N6-acetyllysine. 2 positions are modified to N6-acetyllysine; alternate: K279 and K296. Position 279 is an N6-(pyridoxal phosphate)lysine; alternate (K279). K296 carries the post-translational modification N6-succinyllysine; alternate. The residue at position 302 (K302) is an N6-acetyllysine. N6-acetyllysine; alternate is present on K309. At K309 the chain carries N6-succinyllysine; alternate. R313 carries the asymmetric dimethylarginine modification. K345 carries the post-translational modification N6-acetyllysine. K363 carries the N6-acetyllysine; alternate modification. The residue at position 363 (K363) is an N6-succinyllysine; alternate. An N6-acetyllysine mark is found at K364 and K387. Residues K396 and K404 each carry the N6-acetyllysine; alternate modification. N6-succinyllysine; alternate is present on residues K396 and K404. R407 contributes to the substrate binding site.

Belongs to the class-I pyridoxal-phosphate-dependent aminotransferase family. In terms of assembly, homodimer. Requires pyridoxal 5'-phosphate as cofactor.

Its subcellular location is the mitochondrion matrix. It is found in the cell membrane. It catalyses the reaction L-aspartate + 2-oxoglutarate = oxaloacetate + L-glutamate. The enzyme catalyses L-kynurenine + 2-oxoglutarate = kynurenate + L-glutamate + H2O. In terms of biological role, catalyzes the irreversible transamination of the L-tryptophan metabolite L-kynurenine to form kynurenic acid (KA). As a member of the malate-aspartate shuttle, it has a key role in the intracellular NAD(H) redox balance. Is important for metabolite exchange between mitochondria and cytosol, and for amino acid metabolism. Facilitates cellular uptake of long-chain free fatty acids. This is Aspartate aminotransferase, mitochondrial (GOT2) from Sus scrofa (Pig).